The sequence spans 348 residues: D-alanine--D-alanine ligase (348 aa).

The ATP-grasp domain occupies 132–334 (KRVLESAGIP…YAELIEELVR (203 aa)). ATP is bound at residue 162–217 (EAVLSYPVFVKPANMGSSVGISKAESEEELRAAILLALTYDSRILIEQGVLAREIE). The Mg(2+) site is built by aspartate 288, glutamate 301, and asparagine 303.

The protein belongs to the D-alanine--D-alanine ligase family. It depends on Mg(2+) as a cofactor. Mn(2+) is required as a cofactor.

The protein resides in the cytoplasm. The catalysed reaction is 2 D-alanine + ATP = D-alanyl-D-alanine + ADP + phosphate + H(+). The protein operates within cell wall biogenesis; peptidoglycan biosynthesis. In terms of biological role, cell wall formation. The protein is D-alanine--D-alanine ligase of Streptococcus equi subsp. equi (strain 4047).